The sequence spans 111 residues: Beta-microseminoprotein (111 aa).

The first 20 residues, 1–20 (MKFLLGTLVVLATFVTLCNS), serve as a signal peptide directing secretion. Q21 is modified (pyrrolidone carboxylic acid). 5 disulfide bridges follow: C22/C67, C35/C59, C54/C90, C57/C66, and C81/C104.

Belongs to the beta-microseminoprotein family. Homodimer; Interacts with PI16. Corpora lutea, mostly in the luteal cells surrounding blood vessels.

It localises to the secreted. This Sus scrofa (Pig) protein is Beta-microseminoprotein (MSMB).